Here is a 277-residue protein sequence, read N- to C-terminus: Cis-2,3-dihydrobiphenyl-2,3-diol dehydrogenase (277 aa).

NAD(+) is bound by residues 9–36 (LITG…AVLD) and aspartate 59. Serine 142 provides a ligand contact to substrate. Tyrosine 155 (proton acceptor) is an active-site residue. Lysine 159 contributes to the NAD(+) binding site.

The protein belongs to the short-chain dehydrogenases/reductases (SDR) family.

It catalyses the reaction (2R,3S)-3-phenylcyclohexa-3,5-diene-1,2-diol + NAD(+) = biphenyl-2,3-diol + NADH + H(+). It functions in the pathway xenobiotic degradation; biphenyl degradation; 2-hydroxy-2,4-pentadienoate and benzoate from biphenyl: step 2/4. In Paraburkholderia xenovorans (strain LB400), this protein is Cis-2,3-dihydrobiphenyl-2,3-diol dehydrogenase (bphB).